We begin with the raw amino-acid sequence, 374 residues long: MSLLASPFAQLDLIRQPEQQNEPLQAFDAADEYLLNHLAEQQPASDTRVLVLNDSFGALAASLLGKVQVSSSGDSYLGALALEKNLVRNGLPFDAVRVVPASEPLAGPFDRVLIRVPKTLALLEEQLIRLQGQLAPGAQVVAAAMVKHLPRAAGDLLERYIGPVQASLAVKKARLLIATPQDKQPVVSPYPTRYRLEQPAIELLNHANVFCREGLDIGTRAFLPHLPQNLGSARVADLGCGNGVLAIASALDNPQAHYTLVDESFMAVQSARENWQAVLGEREAQMRAGDGLAGQAAQSLEVVLCNPPFHQQQVVGDFLAWRMFQQAREALVVGGALYIVGNRHLGYHSKLARLFRGVEQVAATPKFVILKARK.

This sequence belongs to the methyltransferase superfamily. RlmG family.

It is found in the cytoplasm. The catalysed reaction is guanosine(1835) in 23S rRNA + S-adenosyl-L-methionine = N(2)-methylguanosine(1835) in 23S rRNA + S-adenosyl-L-homocysteine + H(+). Its function is as follows. Specifically methylates the guanine in position 1835 (m2G1835) of 23S rRNA. This chain is Ribosomal RNA large subunit methyltransferase G, found in Pseudomonas fluorescens (strain ATCC BAA-477 / NRRL B-23932 / Pf-5).